A 190-amino-acid polypeptide reads, in one-letter code: Holliday junction branch migration complex subunit RuvA (190 aa).

Positions 1-64 (MIGRITGTLI…EDAHLLYGFG (64 aa)) are domain I. Residues 65 to 137 (TASERAAFRE…MRGKLGADIG (73 aa)) are domain II. A flexible linker region spans residues 137-141 (GATPH). The tract at residues 142–190 (AVPDSQSDILNALLALGYSEKESLAALKTLPEGLGVSDGIRQALKALAR) is domain III.

Belongs to the RuvA family. Homotetramer. Forms an RuvA(8)-RuvB(12)-Holliday junction (HJ) complex. HJ DNA is sandwiched between 2 RuvA tetramers; dsDNA enters through RuvA and exits via RuvB. An RuvB hexamer assembles on each DNA strand where it exits the tetramer. Each RuvB hexamer is contacted by two RuvA subunits (via domain III) on 2 adjacent RuvB subunits; this complex drives branch migration. In the full resolvosome a probable DNA-RuvA(4)-RuvB(12)-RuvC(2) complex forms which resolves the HJ.

Its subcellular location is the cytoplasm. Its function is as follows. The RuvA-RuvB-RuvC complex processes Holliday junction (HJ) DNA during genetic recombination and DNA repair, while the RuvA-RuvB complex plays an important role in the rescue of blocked DNA replication forks via replication fork reversal (RFR). RuvA specifically binds to HJ cruciform DNA, conferring on it an open structure. The RuvB hexamer acts as an ATP-dependent pump, pulling dsDNA into and through the RuvAB complex. HJ branch migration allows RuvC to scan DNA until it finds its consensus sequence, where it cleaves and resolves the cruciform DNA. This chain is Holliday junction branch migration complex subunit RuvA, found in Bordetella avium (strain 197N).